The primary structure comprises 348 residues: Malyl-CoA/beta-methylmalyl-CoA/citramalyl-CoA lyase (348 aa).

Residues 32–33 (HF), lysine 40, and arginine 92 contribute to the substrate site. Mg(2+) is bound by residues glutamate 157 and aspartate 184. Substrate-binding positions include 183-184 (AD) and leucine 274.

The protein belongs to the HpcH/HpaI aldolase family. Homohexamer. Dimer of trimers. The cofactor is Mg(2+). Mn(2+) is required as a cofactor.

It catalyses the reaction (S)-malyl-CoA = glyoxylate + acetyl-CoA. The catalysed reaction is (2R,3S)-beta-methylmalyl-CoA = propanoyl-CoA + glyoxylate. It carries out the reaction (3S)-citramalyl-CoA = pyruvate + acetyl-CoA. Its activity is regulated as follows. Inhibited by oxalate. In terms of biological role, involved in the 3-hydroxypropionate cycle used for autotrophic carbon dioxide fixation, and in the glyoxylate assimilation cycle used to regenerate acetyl-CoA and produce pyruvate as universal precursor for biosynthesis. As a part of the 3-hydroxypropionate cycle, it catalyzes the cleavage of (S)-malyl-CoA to yield acetyl-CoA and glyoxylate. As part of the glyoxylate assimilation cycle, it catalyzes the condensation of glyoxylate with propionyl-CoA to yield (2R,3S)-beta-methylmalyl-CoA, and catalyzes the cleavage of (S)-citramalyl-CoA to yield acetyl-CoA and pyruvate. This is Malyl-CoA/beta-methylmalyl-CoA/citramalyl-CoA lyase (mcl) from Chloroflexus aurantiacus.